We begin with the raw amino-acid sequence, 916 residues long: Internalin J (916 aa).

The signal sequence occupies residues 1–25; the sequence is MKTSKIIIASLVSLTLVSNPILTFA. LRR repeat units follow at residues 94-115, 116-136, 137-157, 158-179, 180-200, 201-221, 222-243, 244-263, 264-284, 285-306, 316-325, 338-357, 359-368, and 380-402; these read TLTS…EKLT, GLTK…SQNT, NLTY…TPLT, KLTY…QNPL, LTYL…HNTQ, LTEL…TPQT, QLTT…QNKL, LNRL…NQNI, QLTF…TPLT, QLTY…TLSK, DLLEIDLTHN, KIKE…DCQA, GITELDLSQN, and ELTK…NAHI. MucBP domains follow at residues 506–568, 576–638, 646–708, 717–779, and 787–849; these read PIKG…SQSV, IVAA…SQTV, IVAA…AQTV, and APEK…SQTV. The segment at 862–888 is disordered; it reads PLPDKKTTKPSNLKTTEVKKASDTLPK. The short motif at 886 to 890 is the LPXTG sorting signal element; the sequence is LPKTG. A Pentaglycyl murein peptidoglycan amidated threonine modification is found at Thr-889. The propeptide at 890-916 is removed by sortase; sequence GDSTPWKSALLGVFLSSTALVIWKKKK.

Belongs to the internalin family.

Its subcellular location is the secreted. It localises to the cell wall. Its function is as follows. Involved in several steps of L.monocytogenes infection, probably improves adhesin to host cells. This is Internalin J (inlJ) from Listeria monocytogenes serotype 4b (strain F2365).